Reading from the N-terminus, the 953-residue chain is Isoleucine--tRNA ligase (953 aa).

Positions 58–68 (PYANGSIHIGH) match the 'HIGH' region motif. Glutamate 577 contacts L-isoleucyl-5'-AMP. Residues 618-622 (KMSKS) carry the 'KMSKS' region motif. Residue lysine 621 participates in ATP binding. Zn(2+) is bound by residues cysteine 916, cysteine 919, cysteine 936, and cysteine 939.

It belongs to the class-I aminoacyl-tRNA synthetase family. IleS type 1 subfamily. Monomer. Zn(2+) is required as a cofactor.

The protein resides in the cytoplasm. It catalyses the reaction tRNA(Ile) + L-isoleucine + ATP = L-isoleucyl-tRNA(Ile) + AMP + diphosphate. Functionally, catalyzes the attachment of isoleucine to tRNA(Ile). As IleRS can inadvertently accommodate and process structurally similar amino acids such as valine, to avoid such errors it has two additional distinct tRNA(Ile)-dependent editing activities. One activity is designated as 'pretransfer' editing and involves the hydrolysis of activated Val-AMP. The other activity is designated 'posttransfer' editing and involves deacylation of mischarged Val-tRNA(Ile). This chain is Isoleucine--tRNA ligase, found in Aeromonas salmonicida (strain A449).